An 837-amino-acid polypeptide reads, in one-letter code: Protein translocase subunit SecA (837 aa).

ATP-binding positions include glutamine 83, 101 to 105 (GEGKT), and aspartate 494.

It belongs to the SecA family. In terms of assembly, monomer and homodimer. Part of the essential Sec protein translocation apparatus which comprises SecA, SecYEG and auxiliary proteins SecDF. Other proteins may also be involved.

It localises to the cell membrane. It is found in the cytoplasm. The catalysed reaction is ATP + H2O + cellular proteinSide 1 = ADP + phosphate + cellular proteinSide 2.. Part of the Sec protein translocase complex. Interacts with the SecYEG preprotein conducting channel. Has a central role in coupling the hydrolysis of ATP to the transfer of proteins into and across the cell membrane, serving as an ATP-driven molecular motor driving the stepwise translocation of polypeptide chains across the membrane. The sequence is that of Protein translocase subunit SecA from Ureaplasma parvum serovar 3 (strain ATCC 27815 / 27 / NCTC 11736).